The following is a 256-amino-acid chain: Hydroxyacylglutathione hydrolase (256 aa).

7 residues coordinate Zn(2+): His-57, His-59, Asp-61, His-62, His-115, Asp-134, and His-172.

The protein belongs to the metallo-beta-lactamase superfamily. Glyoxalase II family. As to quaternary structure, monomer. Zn(2+) serves as cofactor.

The catalysed reaction is an S-(2-hydroxyacyl)glutathione + H2O = a 2-hydroxy carboxylate + glutathione + H(+). The protein operates within secondary metabolite metabolism; methylglyoxal degradation; (R)-lactate from methylglyoxal: step 2/2. Functionally, thiolesterase that catalyzes the hydrolysis of S-D-lactoyl-glutathione to form glutathione and D-lactic acid. The protein is Hydroxyacylglutathione hydrolase of Jannaschia sp. (strain CCS1).